Consider the following 293-residue polypeptide: Ethanolamine ammonia-lyase small subunit (293 aa).

Adenosylcob(III)alamin is bound by residues Val-207 and Glu-228.

This sequence belongs to the EutC family. In terms of assembly, the basic unit is a heterodimer which dimerizes to form tetramers. The heterotetramers trimerize; 6 large subunits form a core ring with 6 small subunits projecting outwards. Adenosylcob(III)alamin serves as cofactor.

Its subcellular location is the bacterial microcompartment. The enzyme catalyses ethanolamine = acetaldehyde + NH4(+). It participates in amine and polyamine degradation; ethanolamine degradation. In terms of biological role, catalyzes the deamination of various vicinal amino-alcohols to oxo compounds. Allows this organism to utilize ethanolamine as the sole source of nitrogen and carbon in the presence of external vitamin B12. The polypeptide is Ethanolamine ammonia-lyase small subunit (Listeria monocytogenes serotype 4a (strain HCC23)).